The chain runs to 485 residues: NADH-quinone oxidoreductase subunit N (485 aa).

14 helical membrane-spanning segments follow: residues 8 to 28 (LIAL…MLSI), 35 to 55 (FLNA…LWFV), 71 to 91 (GFAM…CTFA), 105 to 125 (FYLL…ANHL), 127 to 147 (ALFL…GYAF), 159 to 179 (YTIL…LVYA), 203 to 223 (LLAG…LVPF), 235 to 255 (PAPV…GVVM), 271 to 291 (VVLG…ALSQ), 297 to 317 (LLGY…IALQ), 326 to 346 (VGVY…VVSL), 373 to 393 (AAVM…LGFI), 408 to 430 (WWLV…RVAV), and 455 to 475 (IVVL…QPLI).

Belongs to the complex I subunit 2 family. In terms of assembly, NDH-1 is composed of 13 different subunits. Subunits NuoA, H, J, K, L, M, N constitute the membrane sector of the complex.

It localises to the cell inner membrane. It carries out the reaction a quinone + NADH + 5 H(+)(in) = a quinol + NAD(+) + 4 H(+)(out). Its function is as follows. NDH-1 shuttles electrons from NADH, via FMN and iron-sulfur (Fe-S) centers, to quinones in the respiratory chain. The immediate electron acceptor for the enzyme in this species is believed to be ubiquinone. Couples the redox reaction to proton translocation (for every two electrons transferred, four hydrogen ions are translocated across the cytoplasmic membrane), and thus conserves the redox energy in a proton gradient. The polypeptide is NADH-quinone oxidoreductase subunit N (Salmonella dublin (strain CT_02021853)).